The sequence spans 203 residues: Thymidylate kinase (203 aa).

9–16 contacts ATP; sequence GPEGSGKT.

It belongs to the thymidylate kinase family.

It catalyses the reaction dTMP + ATP = dTDP + ADP. In terms of biological role, phosphorylation of dTMP to form dTDP in both de novo and salvage pathways of dTTP synthesis. The protein is Thymidylate kinase of Staphylococcus haemolyticus (strain JCSC1435).